A 69-amino-acid chain; its full sequence is Sec-independent protein translocase protein TatA (69 aa).

The chain crosses the membrane as a helical span at residues 1-21 (MFGLGGQELVLILLIILLLFG). Residues 48–69 (EELNKAVDDTPEKEKKSSSEKS) are disordered.

Belongs to the TatA/E family. As to quaternary structure, forms a complex with TatC.

It is found in the cell inner membrane. In terms of biological role, part of the twin-arginine translocation (Tat) system that transports large folded proteins containing a characteristic twin-arginine motif in their signal peptide across membranes. TatA could form the protein-conducting channel of the Tat system. In Chlorobium phaeobacteroides (strain BS1), this protein is Sec-independent protein translocase protein TatA.